The sequence spans 208 residues: Ras-related protein Rab-6A (208 aa).

Serine 2 carries the N-acetylserine modification. 10 residues coordinate GTP: serine 23, valine 24, glycine 25, lysine 26, threonine 27, serine 28, aspartate 39, asparagine 40, tyrosine 42, and threonine 45. Residue threonine 27 participates in Mg(2+) binding. The Switch 1 motif lies at 32 to 50; that stretch reads RFMYDSFDNTYQATIGIDF. Mg(2+) is bound by residues threonine 45 and aspartate 68. Positions 69 to 88 match the Switch 2 motif; sequence TAGQERFRSLIPSYIRDSTV. Glycine 71, asparagine 126, lysine 127, aspartate 129, serine 156, alanine 157, and lysine 158 together coordinate GTP. Residue serine 184 is modified to Phosphoserine. 2 S-geranylgeranyl cysteine lipidation sites follow: cysteine 206 and cysteine 208. Cysteine 208 carries the cysteine methyl ester modification.

It belongs to the small GTPase superfamily. Rab family. Interacts with BICDL1; leads to its accumulation in the pericentrosomal region. Interacts with SCYL1BP1. Interacts with VSP52. Interacts with RABGAP1. Interacts with GCC2 (via its GRIP domain). Interacts with RAB6IP1 (via its RUN 1 domain). Interacts with TMF1. Interacts with CIMAP3. Interacts (GTP-bound) with APBA1/MINT1 isoform 3, also called Mint1_826, but not with isoform 1. Interacts with RIC1; the interaction is direct with a preference for RAB6A-GDP. Interacts with RGP1; the interaction is direct with a preference for RAB6A-GDP. As to quaternary structure, interacts (GTP-bound) with DYNLRB1; the interaction is direct. Interacts with BICD1. Interacts with BICD2; the interaction is direct. Interacts (GTP-bound) with VPS13B. In terms of assembly, interacts with BICD1. Interacts (GDP-bound) with DYNLRB1; the interaction is direct. Interacts (GTP-bound) with VPS13B. Mg(2+) serves as cofactor. In terms of processing, prenylated.

Its subcellular location is the golgi apparatus membrane. It localises to the cytoplasmic vesicle. It is found in the secretory vesicle. The protein localises to the acrosome membrane. The enzyme catalyses GTP + H2O = GDP + phosphate + H(+). Its activity is regulated as follows. Regulated by guanine nucleotide exchange factors (GEFs) which promote the exchange of bound GDP for free GTP. Regulated by GTPase activating proteins (GAPs) which increase the GTP hydrolysis activity. Inhibited by GDP dissociation inhibitors (GDIs). Its function is as follows. The small GTPases Rab are key regulators of intracellular membrane trafficking, from the formation of transport vesicles to their fusion with membranes. Rabs cycle between an inactive GDP-bound form and an active GTP-bound form that is able to recruit to membranes different sets of downstream effectors directly responsible for vesicle formation, movement, tethering and fusion. RAB6A acts as a regulator of COPI-independent retrograde transport from the Golgi apparatus towards the endoplasmic reticulum (ER). Has a low GTPase activity. Recruits VPS13B to the Golgi membrane. Plays a role in neuron projection development. The protein is Ras-related protein Rab-6A of Mus musculus (Mouse).